We begin with the raw amino-acid sequence, 492 residues long: MEVARTVRIPHAFDGLTLSRQATMRRTLFLIPHEFAGWPIFGIGWALLFLLIAVLAYVGWESRRGGLGASTAIRQIAGFAVMAAVILVVVVPRTELVNTLGDPVGVAVRGYGMFLMLAAIASVGLAAWRAERAGLGADSILQLAPWTFIGGLLGARVFYVTQYYEDFLRPTWGETLMAMAALNQGGLVVYGGFIGGFIASLIALKRHQTPIWRIGDVIIPCVFVGLLFGRLGCLMNGCCYGGACEAGPLAVQFPAGSQVHAEQLLSGELLGIEGHPVVSDEEPPAGQSQMVVDSVRPDSLANQAGVKKGETLTIALDPSYRDQVPLDRPAEEALPGVVVLRDDEVVARFSPRDLPSIADPVWGTQIISSVFAAIMFVVLLIVERILHRPSKQTDDAVTERAITGGRRPGVLMLVGFIAYGVLRIVLEWIRVDEKGQFGTSLSISQWVSLVVIAASLVTLFIRWRGVDSTSEQTPGGGNTNVVGGSDAAAAGL.

Transmembrane regions (helical) follow at residues 40 to 60 (IFGIGWALLFLLIAVLAYVGW), 72 to 92 (AIRQIAGFAVMAAVILVVVVP), 106 to 126 (VAVRGYGMFLMLAAIASVGLA), 133 to 153 (AGLGADSILQLAPWTFIGGLL), 184 to 204 (QGGLVVYGGFIGGFIASLIAL), 214 to 234 (IGDVIIPCVFVGLLFGRLGCL), 361 to 381 (VWGTQIISSVFAAIMFVVLLI), 409 to 429 (GVLMLVGFIAYGVLRIVLEWI), and 441 to 461 (LSISQWVSLVVIAASLVTLFI). Arg-230 provides a ligand contact to a 1,2-diacyl-sn-glycero-3-phospho-(1'-sn-glycerol).

It belongs to the Lgt family.

It is found in the cell inner membrane. It carries out the reaction L-cysteinyl-[prolipoprotein] + a 1,2-diacyl-sn-glycero-3-phospho-(1'-sn-glycerol) = an S-1,2-diacyl-sn-glyceryl-L-cysteinyl-[prolipoprotein] + sn-glycerol 1-phosphate + H(+). It functions in the pathway protein modification; lipoprotein biosynthesis (diacylglyceryl transfer). Its function is as follows. Catalyzes the transfer of the diacylglyceryl group from phosphatidylglycerol to the sulfhydryl group of the N-terminal cysteine of a prolipoprotein, the first step in the formation of mature lipoproteins. The polypeptide is Phosphatidylglycerol--prolipoprotein diacylglyceryl transferase (Rhodopirellula baltica (strain DSM 10527 / NCIMB 13988 / SH1)).